The primary structure comprises 235 residues: Small ribosomal subunit protein uS2c (235 aa).

The protein belongs to the universal ribosomal protein uS2 family.

It is found in the plastid. The protein resides in the chloroplast. The polypeptide is Small ribosomal subunit protein uS2c (rps2) (Guillardia theta (Cryptophyte)).